The primary structure comprises 710 residues: MSDNDGLMLMNFTTESGPDNASSHRRVKVTGGKWKERRKLKMKLEGRPLRPKRPAAAVEEAPAAAVPEGSAIEPAAKRPRGRNERAPKDVPPQPANAQVVSSLFTSTRAITTSVNDHERASNDVAPSNAPLLQDTFEALGVRGTLLEHLTGKMKIQKPTKIQKMAIPEVLNGKADLFLHAQTGSGKTLAFLLPVLQTLLSLEQRIDRHSGCFAMIVTPTRELAAQIYGVISTLAQCCHYLVPCLLVGGERKKSEKARLRKGANFIVGTPGRMLDHLQNTKVAREQLPHSLRYLILDEGDKLMELGFEETLKSILEIVHSVACDNTRFPRLPQRIVHVLCSATRQGTVSKLGDIALTDPKVIAASDSTTDVSTVPDQLLQKIAIVPPKLRLVTLCAAISELSRKAPTETTTRTIVFISCADSVDFHYDVFSGLGGSHRDLVPGTVRELAAGSRALPCFSADSPPNTVFYKLHGSLPQAVRVATLRHFSSDAAATRGKHLVLFCTDVASRGLDLPRVSTVIEMDPPFAVEDHLHRIGRTARAGVAGESLLFLLPGEEEGYMEHIRAHHPRGWELLRYDRDLLAPAFAAPVARSDRPTTATDAAWDSNATTWHLNVERRVLEDPSAKDLAIKGYTSHIRAYATHISQEKRFFNVRCLHLGHLAKAFGLRERPKGMAAHRGKPATPKPKQDDARTKMLRMARQAVAQSNSEFNY.

The disordered stretch occupies residues 1 to 97 (MSDNDGLMLM…KDVPPQPANA (97 aa)). The segment covering 11–21 (NFTTESGPDNA) has biased composition (polar residues). Positions 54–68 (PAAAVEEAPAAAVPE) are enriched in low complexity. The Q motif signature appears at 134 to 163 (DTFEALGVRGTLLEHLTGKMKIQKPTKIQK). The region spanning 167–361 (PEVLNGKADL…DIALTDPKVI (195 aa)) is the Helicase ATP-binding domain. An ATP-binding site is contributed by 180 to 187 (AQTGSGKT). Residues 296–299 (DEGD) carry the DEAD box motif. The Helicase C-terminal domain occupies 396–588 (AISELSRKAP…LLAPAFAAPV (193 aa)). Residues 669 to 690 (PKGMAAHRGKPATPKPKQDDAR) form a disordered region.

This sequence belongs to the DEAD box helicase family. DDX31/DBP7 subfamily.

Its subcellular location is the nucleus. The protein localises to the nucleolus. The catalysed reaction is ATP + H2O = ADP + phosphate + H(+). In terms of biological role, ATP-binding RNA helicase involved in the biogenesis of 60S ribosomal subunits and is required for the normal formation of 25S and 5.8S rRNAs. The chain is ATP-dependent RNA helicase DBP7 (DBP7) from Eremothecium gossypii (strain ATCC 10895 / CBS 109.51 / FGSC 9923 / NRRL Y-1056) (Yeast).